The chain runs to 329 residues: Minor capsid protein A1 (329 aa).

It localises to the virion. In terms of biological role, minor capsid protein. This is Minor capsid protein A1 from Escherichia coli (Bacteriophage Q-beta).